Consider the following 151-residue polypeptide: S-protein homolog 74 (151 aa).

The N-terminal stretch at 1 to 25 is a signal peptide; sequence MNYIKQFILAICFYLVLTCQDHVLA.

This sequence belongs to the plant self-incompatibility (S1) protein family.

It is found in the secreted. This chain is S-protein homolog 74, found in Arabidopsis thaliana (Mouse-ear cress).